Consider the following 4114-residue polypeptide: Ferrichrome siderophore peptide synthetase (4114 aa).

4 consecutive Carrier domains span residues 797-874, 1947-2021, 3020-3093, and 3574-3650; these read DPAT…QSSG, TDSE…IDKL, TQSE…MQSS, and QALS…SQTN. 4 positions are modified to O-(pantetheine 4'-phosphoryl)serine: Ser-835, Ser-1982, Ser-3054, and Ser-3611. The interval 4040 to 4061 is disordered; it reads LDYSHHSQHSTHDRTPPSTPHV. Basic and acidic residues predominate over residues 4041–4054; the sequence is DYSHHSQHSTHDRT.

The protein belongs to the ATP-dependent AMP-binding enzyme family. Requires pantetheine 4'-phosphate as cofactor.

It participates in siderophore biosynthesis; ferrichrome biosynthesis. Its function is as follows. Multidomain peptide synthetase involved in ferrichrome biosynthesis. The protein is Ferrichrome siderophore peptide synthetase (SID2) of Mycosarcoma maydis (Corn smut fungus).